Here is a 205-residue protein sequence, read N- to C-terminus: High frequency lysogenization protein HflD homolog (205 aa).

Belongs to the HflD family.

The protein localises to the cytoplasm. It is found in the cell inner membrane. The protein is High frequency lysogenization protein HflD homolog of Shewanella oneidensis (strain ATCC 700550 / JCM 31522 / CIP 106686 / LMG 19005 / NCIMB 14063 / MR-1).